We begin with the raw amino-acid sequence, 501 residues long: ATP synthase subunit alpha (501 aa).

169–176 lines the ATP pocket; it reads GDRQTGKT.

The protein belongs to the ATPase alpha/beta chains family. As to quaternary structure, F-type ATPases have 2 components, CF(1) - the catalytic core - and CF(0) - the membrane proton channel. CF(1) has five subunits: alpha(3), beta(3), gamma(1), delta(1), epsilon(1). CF(0) has three main subunits: a(1), b(2) and c(9-12). The alpha and beta chains form an alternating ring which encloses part of the gamma chain. CF(1) is attached to CF(0) by a central stalk formed by the gamma and epsilon chains, while a peripheral stalk is formed by the delta and b chains.

The protein localises to the cell membrane. It catalyses the reaction ATP + H2O + 4 H(+)(in) = ADP + phosphate + 5 H(+)(out). Functionally, produces ATP from ADP in the presence of a proton gradient across the membrane. The alpha chain is a regulatory subunit. In Streptococcus pneumoniae serotype 19F (strain G54), this protein is ATP synthase subunit alpha.